The chain runs to 211 residues: Phosphatidylglycerophosphatase C (211 aa).

The Cytoplasmic segment spans residues 1–33 (MATHERRVVFFDLDGTLHQQDMFGSFLRYLLRR). A helical transmembrane segment spans residues 34–54 (QPLNALLVLPLLPIIAIALLI). Residues 55 to 211 (KGRAARWPMS…TPRGELQQLE (157 aa)) lie on the Periplasmic side of the membrane.

Mg(2+) serves as cofactor.

It localises to the cell inner membrane. It carries out the reaction a 1,2-diacyl-sn-glycero-3-phospho-(1'-sn-glycero-3'-phosphate) + H2O = a 1,2-diacyl-sn-glycero-3-phospho-(1'-sn-glycerol) + phosphate. The protein operates within phospholipid metabolism; phosphatidylglycerol biosynthesis; phosphatidylglycerol from CDP-diacylglycerol: step 2/2. In terms of biological role, lipid phosphatase which dephosphorylates phosphatidylglycerophosphate (PGP) to phosphatidylglycerol (PG). The chain is Phosphatidylglycerophosphatase C (pgpC) from Escherichia coli (strain K12).